Consider the following 114-residue polypeptide: UPF0212 protein UNCMA_00570 (114 aa).

It belongs to the UPF0212 family.

This chain is UPF0212 protein UNCMA_00570, found in Methanocella arvoryzae (strain DSM 22066 / NBRC 105507 / MRE50).